The following is a 286-amino-acid chain: ATP synthase gamma chain (286 aa).

It belongs to the ATPase gamma chain family. As to quaternary structure, F-type ATPases have 2 components, CF(1) - the catalytic core - and CF(0) - the membrane proton channel. CF(1) has five subunits: alpha(3), beta(3), gamma(1), delta(1), epsilon(1). CF(0) has three main subunits: a, b and c.

It localises to the cell inner membrane. Produces ATP from ADP in the presence of a proton gradient across the membrane. The gamma chain is believed to be important in regulating ATPase activity and the flow of protons through the CF(0) complex. The sequence is that of ATP synthase gamma chain from Pseudoalteromonas atlantica (strain T6c / ATCC BAA-1087).